The primary structure comprises 87 residues: Small archaeal modifier protein 1 (87 aa).

Residue G87 is modified to 1-thioglycine; alternate. Residue G87 is modified to Glycyl adenylate; alternate. A Glycyl lysine isopeptide (Gly-Lys) (interchain with K-? in acceptor proteins); alternate cross-link involves residue G87.

Post-translationally, the C-terminal glycine is likely acyl-adenylated (-COAMP) by UbaA, and also probably thiocarboxylated (-COSH) to function in sulfur transfer.

Its function is as follows. Functions as a protein modifier covalently attached to lysine residues of substrate proteins, as well as a sulfur carrier in molybdenum cofactor (MoCo) biosynthesis. The protein modification process is termed sampylation and involves the formation of an isopeptide bond between the SAMP1 C-terminal glycine carboxylate and the epsilon-amino group of lysine residues on target proteins. May serve as a proteolytic signal in the cell to target proteins for degradation by proteasomes. The sequence is that of Small archaeal modifier protein 1 (samp1) from Haloferax volcanii (strain ATCC 29605 / DSM 3757 / JCM 8879 / NBRC 14742 / NCIMB 2012 / VKM B-1768 / DS2) (Halobacterium volcanii).